We begin with the raw amino-acid sequence, 338 residues long: Ketol-acid reductoisomerase (NADP(+)) (338 aa).

The 181-residue stretch at 1 to 181 (MQVYYDKDCD…GGGRTGIIET (181 aa)) folds into the KARI N-terminal Rossmann domain. Residues 24–27 (YGSQ), R47, S50, S52, and 82–85 (DEFQ) contribute to the NADP(+) site. The active site involves H107. G133 lines the NADP(+) pocket. The KARI C-terminal knotted domain maps to 182 to 327 (TFKDETETDL…EKLRAMMPWI (146 aa)). Mg(2+) contacts are provided by D190, E194, E226, and E230. S251 contributes to the substrate binding site.

This sequence belongs to the ketol-acid reductoisomerase family. The cofactor is Mg(2+).

It carries out the reaction (2R)-2,3-dihydroxy-3-methylbutanoate + NADP(+) = (2S)-2-acetolactate + NADPH + H(+). The enzyme catalyses (2R,3R)-2,3-dihydroxy-3-methylpentanoate + NADP(+) = (S)-2-ethyl-2-hydroxy-3-oxobutanoate + NADPH + H(+). It functions in the pathway amino-acid biosynthesis; L-isoleucine biosynthesis; L-isoleucine from 2-oxobutanoate: step 2/4. Its pathway is amino-acid biosynthesis; L-valine biosynthesis; L-valine from pyruvate: step 2/4. Involved in the biosynthesis of branched-chain amino acids (BCAA). Catalyzes an alkyl-migration followed by a ketol-acid reduction of (S)-2-acetolactate (S2AL) to yield (R)-2,3-dihydroxy-isovalerate. In the isomerase reaction, S2AL is rearranged via a Mg-dependent methyl migration to produce 3-hydroxy-3-methyl-2-ketobutyrate (HMKB). In the reductase reaction, this 2-ketoacid undergoes a metal-dependent reduction by NADPH to yield (R)-2,3-dihydroxy-isovalerate. This chain is Ketol-acid reductoisomerase (NADP(+)), found in Teredinibacter turnerae (strain ATCC 39867 / T7901).